The chain runs to 156 residues: MAGFMKRTMSYLGMSDVVPEDEDDEVIDEEPESSFDTDRSVTPIPAASTQPSTSQRKSVAPFHANINRITTIHPQSYEDAQLVGRALRDGIPVVLNLTDVSQSQAYRIIDFSSGVVFGISGSIERVTERVFLLSPARVDIVAEDTESGMSDNLFEN.

Residues 15 to 58 (SDVVPEDEDDEVIDEEPESSFDTDRSVTPIPAASTQPSTSQRKS) form a disordered region. The span at 18–35 (VPEDEDDEVIDEEPESSF) shows a compositional bias: acidic residues. A compositionally biased stretch (polar residues) spans 47–57 (ASTQPSTSQRK).

It belongs to the SepF family. As to quaternary structure, homodimer. Interacts with FtsZ.

The protein resides in the cytoplasm. Functionally, cell division protein that is part of the divisome complex and is recruited early to the Z-ring. Probably stimulates Z-ring formation, perhaps through the cross-linking of FtsZ protofilaments. Its function overlaps with FtsA. The polypeptide is Cell division protein SepF (Bifidobacterium animalis subsp. lactis (strain AD011)).